Consider the following 186-residue polypeptide: NADH-quinone oxidoreductase subunit C (186 aa).

The disordered stretch occupies residues 166–186; sequence DSLTPWKGVGRPSDPFDGRKE.

The protein belongs to the complex I 30 kDa subunit family. In terms of assembly, NDH-1 is composed of 14 different subunits. Subunits NuoB, C, D, E, F, and G constitute the peripheral sector of the complex.

The protein localises to the cell inner membrane. It carries out the reaction a quinone + NADH + 5 H(+)(in) = a quinol + NAD(+) + 4 H(+)(out). NDH-1 shuttles electrons from NADH, via FMN and iron-sulfur (Fe-S) centers, to quinones in the respiratory chain. The immediate electron acceptor for the enzyme in this species is believed to be ubiquinone. Couples the redox reaction to proton translocation (for every two electrons transferred, four hydrogen ions are translocated across the cytoplasmic membrane), and thus conserves the redox energy in a proton gradient. This chain is NADH-quinone oxidoreductase subunit C, found in Neorickettsia sennetsu (strain ATCC VR-367 / Miyayama) (Ehrlichia sennetsu).